Consider the following 515-residue polypeptide: AAA ATPase forming ring-shaped complexes (515 aa).

A coiled-coil region spans residues 2–49; that stretch reads NDHDEETLASLQQANDQLMAKNHALVKALSRATQEMTKTKAQLNQLAG. 240 to 245 provides a ligand contact to ATP; the sequence is GNGKTL.

It belongs to the AAA ATPase family. In terms of assembly, homohexamer. Assembles into a hexameric ring structure.

The polypeptide is AAA ATPase forming ring-shaped complexes (Bifidobacterium adolescentis (strain ATCC 15703 / DSM 20083 / NCTC 11814 / E194a)).